The primary structure comprises 507 residues: Cobyric acid synthase (507 aa).

The region spanning 251 to 448 is the GATase cobBQ-type domain; sequence DIDIAVVHLP…LHGLFDSDAF (198 aa). Cys-332 (nucleophile) is an active-site residue. His-440 is a catalytic residue.

It belongs to the CobB/CobQ family. CobQ subfamily.

It functions in the pathway cofactor biosynthesis; adenosylcobalamin biosynthesis. Catalyzes amidations at positions B, D, E, and G on adenosylcobyrinic A,C-diamide. NH(2) groups are provided by glutamine, and one molecule of ATP is hydrogenolyzed for each amidation. The protein is Cobyric acid synthase of Klebsiella pneumoniae (strain 342).